The chain runs to 79 residues: Alpha-actitoxin-Ms11a-4 (79 aa).

Positions 1-23 (MKVLVAVLVFALLMCMFVDIAES) are cleaved as a signal peptide. A propeptide spanning residues 24-46 (RRRDNPEYPSGLRYDEEMGVFKR) is cleaved from the precursor. 3 cysteine pairs are disulfide-bonded: Cys47–Cys61, Cys54–Cys67, and Cys60–Cys76. The residue at position 78 (Tyr78) is a Tyrosine amide.

The protein localises to the secreted. Its subcellular location is the nematocyst. Its function is as follows. Alpha-toxins act on postsynaptic membranes, they bind to the nicotinic acetylcholine receptors (nAChR) and thus inhibit them. This toxin very weakly competes with alpha-bungarotoxin for binding to orthosteric sites on muscle-type T.carlifornicus (IC(50)=14.95 uM) and human alpha-7/CHRNA7 nAChRs (IC(50)&gt;45 uM). The sequence is that of Alpha-actitoxin-Ms11a-4 from Metridium senile (Brown sea anemone).